A 111-amino-acid chain; its full sequence is Nucleoid-associated protein Teth514_0034 (111 aa).

It belongs to the YbaB/EbfC family. In terms of assembly, homodimer.

It is found in the cytoplasm. The protein localises to the nucleoid. In terms of biological role, binds to DNA and alters its conformation. May be involved in regulation of gene expression, nucleoid organization and DNA protection. This Thermoanaerobacter sp. (strain X514) protein is Nucleoid-associated protein Teth514_0034.